We begin with the raw amino-acid sequence, 140 residues long: Nucleoside diphosphate kinase (140 aa).

ATP contacts are provided by Lys11, Phe59, Arg87, Thr93, Arg104, and Asn114. His117 acts as the Pros-phosphohistidine intermediate in catalysis.

Belongs to the NDK family. As to quaternary structure, homotetramer. The cofactor is Mg(2+).

The protein localises to the cytoplasm. The catalysed reaction is a 2'-deoxyribonucleoside 5'-diphosphate + ATP = a 2'-deoxyribonucleoside 5'-triphosphate + ADP. The enzyme catalyses a ribonucleoside 5'-diphosphate + ATP = a ribonucleoside 5'-triphosphate + ADP. Major role in the synthesis of nucleoside triphosphates other than ATP. The ATP gamma phosphate is transferred to the NDP beta phosphate via a ping-pong mechanism, using a phosphorylated active-site intermediate. This chain is Nucleoside diphosphate kinase, found in Rhizobium etli (strain ATCC 51251 / DSM 11541 / JCM 21823 / NBRC 15573 / CFN 42).